The sequence spans 471 residues: Proline--tRNA ligase 2 (471 aa).

It belongs to the class-II aminoacyl-tRNA synthetase family. ProS type 3 subfamily. In terms of assembly, homodimer.

Its subcellular location is the cytoplasm. It catalyses the reaction tRNA(Pro) + L-proline + ATP = L-prolyl-tRNA(Pro) + AMP + diphosphate. Its function is as follows. Catalyzes the attachment of proline to tRNA(Pro) in a two-step reaction: proline is first activated by ATP to form Pro-AMP and then transferred to the acceptor end of tRNA(Pro). This Streptomyces avermitilis (strain ATCC 31267 / DSM 46492 / JCM 5070 / NBRC 14893 / NCIMB 12804 / NRRL 8165 / MA-4680) protein is Proline--tRNA ligase 2.